The sequence spans 413 residues: uncharacterized protein (413 aa).

An N-acetyltransferase domain is found at 3–155 (MEPRVLRREE…SRVRLSVPAG (153 aa)). Residues 86–88 (VSV), 94–99 (RRGVLT), and 122–123 (SE) contribute to the acetyl-CoA site. Y127 acts as the Proton donor in catalysis. F413 (proton acceptor; via carboxylate) is an active-site residue.

This sequence belongs to the acetyltransferase Eis family. As to quaternary structure, homohexamer; trimer of dimers.

This is an uncharacterized protein from Streptomyces coelicolor (strain ATCC BAA-471 / A3(2) / M145).